The chain runs to 152 residues: uncharacterized protein (152 aa).

A signal peptide spans 1–24 (MRKMLAYTLYIVTYLTYIMNEVEC).

This is an uncharacterized protein from Acheta domesticus (House cricket).